Reading from the N-terminus, the 142-residue chain is Large ribosomal subunit protein uL22c (142 aa).

It belongs to the universal ribosomal protein uL22 family. Part of the 50S ribosomal subunit.

The protein resides in the plastid. The protein localises to the chloroplast. In terms of biological role, this protein binds specifically to 23S rRNA. Functionally, the globular domain of the protein is located near the polypeptide exit tunnel on the outside of the subunit, while an extended beta-hairpin is found that lines the wall of the exit tunnel in the center of the 70S ribosome. This chain is Large ribosomal subunit protein uL22c (rpl22), found in Oenothera parviflora (Small-flowered evening primrose).